Here is a 315-residue protein sequence, read N- to C-terminus: Borealin (315 aa).

Disordered stretches follow at residues 103–126 and 138–226; these read IEGH…GASG and LRST…TPPM. Phosphothreonine is present on Thr-146. The residue at position 152 (Ser-152) is a Phosphoserine. The span at 153 to 162 shows a compositional bias: basic residues; sequence ARARRARRSR. Phosphoserine is present on Ser-163. Positions 178 to 188 are enriched in low complexity; the sequence is SISSSSSSSRN. Position 205 is a phosphoserine (Ser-205). Thr-209 carries the post-translational modification Phosphothreonine. 3 positions are modified to phosphoserine: Ser-218, Ser-220, and Ser-244.

It belongs to the borealin family. Component of the CPC complex. Ubiquitously expressed in the early embryo. Expression is restricted to the ventral nerve cord and brain during later embryonic stages.

It localises to the nucleus. The protein localises to the chromosome. The protein resides in the centromere. Its subcellular location is the cytoplasm. It is found in the cytoskeleton. It localises to the spindle. Its function is as follows. Component of the chromosomal passenger complex (CPC), a complex that acts as a key regulator of embryonic mitosis. The CPC complex has essential functions at the centromere for ensuring sister chromatid cohesion, recruitment of the CPC to kinetochores, and chromosome alignment and segregation. There is no function in meiotic histone phosphorylation or spindle formation. The sequence is that of Borealin (borr) from Drosophila melanogaster (Fruit fly).